We begin with the raw amino-acid sequence, 558 residues long: Ceramide kinase-like protein (558 aa).

The interval 1–36 (MPWRRRRNRVSALEGGREEEAPPEAAAVPPALLTSP) is disordered. 2 consecutive short sequence motifs (nuclear localization signal) follow at residues 2-9 (PWRRRRNR) and 102-106 (KLKRR). The DAGKc domain maps to 164 to 339 (NRPKSLKILL…VDVCTFSTAG (176 aa)).

In terms of processing, phosphorylated on serine residues. Isoform 1 and isoform 2 are expressed in adult retina, liver and pancreas as well as in fetal brain, lung and kidney. Isoform 3 is expressed in adult retina as well as in fetal lung and liver. Isoform 4 is expressed in adult retina, lung and kidney as well as in fetal lung and liver. Moderately expressed in retina, kidney, lung, testis, trachea, and pancreas. Weakly expressed in brain, placenta and liver.

The protein resides in the cytoplasm. Its subcellular location is the nucleus. The protein localises to the nucleolus. It is found in the golgi apparatus. It localises to the trans-Golgi network. The protein resides in the endoplasmic reticulum. Functionally, has no detectable ceramide-kinase activity. Overexpression of CERKL protects cells from apoptosis in oxidative stress conditions. In Homo sapiens (Human), this protein is Ceramide kinase-like protein (CERKL).